Here is a 1095-residue protein sequence, read N- to C-terminus: Inactive phospholipase C-like protein 1 (1095 aa).

Over residues M1 to P11 the composition is skewed to basic and acidic residues. Residues M1–S61 are disordered. Phosphoserine is present on residues S47 and S77. The segment at S83–V222 is interaction with PPP1C. T93 carries the post-translational modification Phosphothreonine; by PKA. S95 carries the phosphoserine modification. The region spanning S113–S223 is the PH domain. In terms of domain architecture, PI-PLC X-box spans Q398–K542. The segment at K543–R567 is interaction with GABA A beta subunit. T556 bears the Phosphothreonine mark. Position 569 is a phosphoserine (S569). In terms of domain architecture, PI-PLC Y-box spans L585–R701. Residues R701–S830 form the C2 domain. Coiled coils occupy residues L894–L914 and L1034–C1059. Positions K1066 to L1095 are disordered. The span at A1074–L1095 shows a compositional bias: basic and acidic residues. Position 1079 is a phosphoserine (S1079).

Interacts with PPP2CA. Interacts with Ins(1,4,5)P3, Ins(1,4,5,6)P4, GABARAP, GABA receptor beta subunits, GABA receptor gamma-2 subunits and PPP1C. May form a ternary complex with GABA receptor beta subunit and GABARAP. The formation of a ternary complex with GABA receptor beta subunit and GABARAP could be the key step for facilitating the association of GABARAP with the GABA receptor gamma-2 subunit and to allow it to be transported at the right destination. Phosphorylated by the catalytic subunit of PKA. Phosphorylation of Thr-93 resulted in dissociation of PPP1C from PRIP1. Expressed in a variety of fetal and adult organs including brain, lung and kidney. Its expression was greatly reduced in small and non-small cell lung carcinoma. Isoform 1 is predominantly expressed in brain.

The protein resides in the cytoplasm. Functionally, involved in an inositol phospholipid-based intracellular signaling cascade. Shows no PLC activity to phosphatidylinositol 4,5-bisphosphate and phosphatidylinositol. Component in the phospho-dependent endocytosis process of GABA A receptor. Regulates the turnover of receptors and thus contributes to the maintenance of GABA-mediated synaptic inhibition. Its aberrant expression could contribute to the genesis and progression of lung carcinoma. Acts as an inhibitor of PPP1C. The chain is Inactive phospholipase C-like protein 1 (PLCL1) from Homo sapiens (Human).